We begin with the raw amino-acid sequence, 328 residues long: Biotin synthase (328 aa).

A Radical SAM core domain is found at 53 to 282; it reads FHGNRVDLCA…ATTIRYAGGR (230 aa). Residues Cys71, Cys75, and Cys78 each contribute to the [4Fe-4S] cluster site. The [2Fe-2S] cluster site is built by Ser115, Cys147, Cys207, and Arg277.

This sequence belongs to the radical SAM superfamily. Biotin synthase family. As to quaternary structure, homodimer. [4Fe-4S] cluster is required as a cofactor. It depends on [2Fe-2S] cluster as a cofactor.

It catalyses the reaction (4R,5S)-dethiobiotin + (sulfur carrier)-SH + 2 reduced [2Fe-2S]-[ferredoxin] + 2 S-adenosyl-L-methionine = (sulfur carrier)-H + biotin + 2 5'-deoxyadenosine + 2 L-methionine + 2 oxidized [2Fe-2S]-[ferredoxin]. The protein operates within cofactor biosynthesis; biotin biosynthesis; biotin from 7,8-diaminononanoate: step 2/2. Its function is as follows. Catalyzes the conversion of dethiobiotin (DTB) to biotin by the insertion of a sulfur atom into dethiobiotin via a radical-based mechanism. This is Biotin synthase from Desulforudis audaxviator (strain MP104C).